Here is a 299-residue protein sequence, read N- to C-terminus: Pyridoxal kinase PdxY (299 aa).

S18 lines the substrate pocket. Residues D120 and E157 each contribute to the ATP site. Substrate is bound at residue D235.

This sequence belongs to the pyridoxine kinase family. PdxY subfamily. In terms of assembly, homodimer. Mg(2+) serves as cofactor.

The enzyme catalyses pyridoxal + ATP = pyridoxal 5'-phosphate + ADP + H(+). It functions in the pathway cofactor metabolism; pyridoxal 5'-phosphate salvage; pyridoxal 5'-phosphate from pyridoxal: step 1/1. Functionally, pyridoxal kinase involved in the salvage pathway of pyridoxal 5'-phosphate (PLP). Catalyzes the phosphorylation of pyridoxal to PLP. This Deinococcus geothermalis (strain DSM 11300 / CIP 105573 / AG-3a) protein is Pyridoxal kinase PdxY.